Here is a 312-residue protein sequence, read N- to C-terminus: Olfactory receptor 7D2 (312 aa).

At 1 to 25 (MEAGNQTGFLEFILLGLSEDPELQP) the chain is on the extracellular side. Asparagine 5 carries an N-linked (GlcNAc...) asparagine glycan. The helical transmembrane segment at 26–46 (FIFGLFLSMYLVTVLGNLLII) threads the bilayer. Over 47–54 (LAISSDSH) the chain is Cytoplasmic. A helical membrane pass occupies residues 55–75 (LHTPMYFFLSNLSWVDICFST). The Extracellular portion of the chain corresponds to 76-99 (CIVPKMLVNIQTENKAISYMDCLT). A disulfide bridge links cysteine 97 with cysteine 189. The helical transmembrane segment at 100-120 (QVYFSMFFPILDTLLLTVMAY) threads the bilayer. Topologically, residues 121–139 (DRFVAVCHPLHYMIIMNPH) are cytoplasmic. Residues 140 to 160 (LCGLLVFVTWLIGVMTSLLHI) traverse the membrane as a helical segment. The Extracellular portion of the chain corresponds to 161 to 197 (SLMMHLIFCKDFEIPHFFCELTYILQLACSDTFLNST). Residues 198-217 (LIYFMTGVLGVFPLLGIIFS) traverse the membrane as a helical segment. Residues 218–237 (YSRIASSIRKMSSSGGKQKA) lie on the Cytoplasmic side of the membrane. A helical transmembrane segment spans residues 238–258 (LSTCGSHLSVVSLFYGTGIGV). Topologically, residues 259 to 271 (HFTSAVTHSSQKI) are extracellular. The helical transmembrane segment at 272–292 (SVASVMYTVVTPMLNPFIYSL) threads the bilayer. The Cytoplasmic portion of the chain corresponds to 293–312 (RNKDVKGALGSLLSRAASCL).

This sequence belongs to the G-protein coupled receptor 1 family.

The protein localises to the cell membrane. Odorant receptor. This chain is Olfactory receptor 7D2 (OR7D2), found in Homo sapiens (Human).